We begin with the raw amino-acid sequence, 290 residues long: 4-hydroxy-tetrahydrodipicolinate synthase (290 aa).

Residue threonine 44 participates in pyruvate binding. Tyrosine 132 serves as the catalytic Proton donor/acceptor. Lysine 160 acts as the Schiff-base intermediate with substrate in catalysis. Isoleucine 202 contacts pyruvate.

The protein belongs to the DapA family. In terms of assembly, homotetramer; dimer of dimers.

It is found in the cytoplasm. It carries out the reaction L-aspartate 4-semialdehyde + pyruvate = (2S,4S)-4-hydroxy-2,3,4,5-tetrahydrodipicolinate + H2O + H(+). It participates in amino-acid biosynthesis; L-lysine biosynthesis via DAP pathway; (S)-tetrahydrodipicolinate from L-aspartate: step 3/4. In terms of biological role, catalyzes the condensation of (S)-aspartate-beta-semialdehyde [(S)-ASA] and pyruvate to 4-hydroxy-tetrahydrodipicolinate (HTPA). This is 4-hydroxy-tetrahydrodipicolinate synthase from Citrifermentans bemidjiense (strain ATCC BAA-1014 / DSM 16622 / JCM 12645 / Bem) (Geobacter bemidjiensis).